We begin with the raw amino-acid sequence, 162 residues long: Phosphopantetheine adenylyltransferase (162 aa).

T9 contributes to the substrate binding site. ATP-binding positions include 9 to 10 (TF) and H17. K41, L73, and R87 together coordinate substrate. Residues 88–90 (GLR), E98, and 123–129 (FAFLSST) each bind ATP.

The protein belongs to the bacterial CoaD family. Homohexamer. The cofactor is Mg(2+).

The protein localises to the cytoplasm. The catalysed reaction is (R)-4'-phosphopantetheine + ATP + H(+) = 3'-dephospho-CoA + diphosphate. It participates in cofactor biosynthesis; coenzyme A biosynthesis; CoA from (R)-pantothenate: step 4/5. Its function is as follows. Reversibly transfers an adenylyl group from ATP to 4'-phosphopantetheine, yielding dephospho-CoA (dPCoA) and pyrophosphate. This is Phosphopantetheine adenylyltransferase from Vibrio atlanticus (strain LGP32) (Vibrio splendidus (strain Mel32)).